Reading from the N-terminus, the 185-residue chain is Large ribosomal subunit protein uL5 (185 aa).

This sequence belongs to the universal ribosomal protein uL5 family. As to quaternary structure, part of the 50S ribosomal subunit; contacts the 5S rRNA and probably tRNA. Forms a bridge to the 30S subunit in the 70S ribosome.

Its function is as follows. This is one of the proteins that bind and probably mediate the attachment of the 5S RNA into the large ribosomal subunit, where it forms part of the central protuberance. In the 70S ribosome it contacts protein S13 of the 30S subunit (bridge B1b), connecting the 2 subunits; this bridge is implicated in subunit movement. May contact the P site tRNA; the 5S rRNA and some of its associated proteins might help stabilize positioning of ribosome-bound tRNAs. The chain is Large ribosomal subunit protein uL5 from Haloquadratum walsbyi (strain DSM 16790 / HBSQ001).